The chain runs to 370 residues: Histidinol-phosphate aminotransferase 1 (370 aa).

Lys222 is modified (N6-(pyridoxal phosphate)lysine).

Belongs to the class-II pyridoxal-phosphate-dependent aminotransferase family. Histidinol-phosphate aminotransferase subfamily. As to quaternary structure, homodimer. It depends on pyridoxal 5'-phosphate as a cofactor.

The enzyme catalyses L-histidinol phosphate + 2-oxoglutarate = 3-(imidazol-4-yl)-2-oxopropyl phosphate + L-glutamate. It participates in amino-acid biosynthesis; L-histidine biosynthesis; L-histidine from 5-phospho-alpha-D-ribose 1-diphosphate: step 7/9. This chain is Histidinol-phosphate aminotransferase 1, found in Bacillus cereus (strain ZK / E33L).